The sequence spans 62 residues: Large ribosomal subunit protein uL29 (62 aa).

Belongs to the universal ribosomal protein uL29 family.

In Geotalea daltonii (strain DSM 22248 / JCM 15807 / FRC-32) (Geobacter daltonii), this protein is Large ribosomal subunit protein uL29.